Consider the following 416-residue polypeptide: Putative competence-damage inducible protein (416 aa).

The protein belongs to the CinA family.

In Geobacillus sp. (strain WCH70), this protein is Putative competence-damage inducible protein.